The sequence spans 75 residues: Large ribosomal subunit protein bL31 (75 aa).

It belongs to the bacterial ribosomal protein bL31 family. Type A subfamily. Part of the 50S ribosomal subunit.

In terms of biological role, binds the 23S rRNA. This chain is Large ribosomal subunit protein bL31, found in Pelodictyon phaeoclathratiforme (strain DSM 5477 / BU-1).